Consider the following 30-residue polypeptide: Circulin A (30 aa).

The segment at residues 1–30 (GIPCGESCVWIPCISAALGCSCKNKVCYRN) is a cross-link (cyclopeptide (Gly-Asn)). 3 cysteine pairs are disulfide-bonded: Cys-4-Cys-20, Cys-8-Cys-22, and Cys-13-Cys-27.

Post-translationally, this is a cyclic peptide. As to expression, expressed in fruit, pedicel, root and stem but not in leaf (at protein level).

Its function is as follows. Probably participates in a plant defense mechanism. The chain is Circulin A from Chassalia chartacea (Chassalia curviflora).